A 68-amino-acid polypeptide reads, in one-letter code: Alpha-conotoxin PIVA (68 aa).

Positions 1 to 16 (MFTVFLLVVLATTVVS) are cleaved as a signal peptide. Positions 17–41 (FTSDRASDDRNTNDKASRLLSHVVR) are excised as a propeptide. Cystine bridges form between Cys43-Cys57, Cys44-Cys52, and Cys55-Cys64. 4-hydroxyproline; partial occurs at positions 48 and 54. Pro61 carries the 4-hydroxyproline modification. Position 66 is a glutamine amide (Gln66).

This sequence belongs to the conotoxin A superfamily. Expressed by the venom duct.

The protein resides in the secreted. In terms of biological role, alpha-conotoxins act on postsynaptic membranes, they bind to the nicotinic acetylcholine receptors (nAChR) and thus inhibit them. This toxin has higher affinity for the adult subtype (alpha-1-beta-1-gamma-delta (CHRNA1-CHRNB1-CHRNG-CHRND) subunits) (IC(50)=2.3 nM) of the receptor than for the fetal subtype (alpha-1-beta-1-epsilon-delta (CHRNA1-CHRNB1-CHRND-CHRNE) subunits) (IC(50)=22 nM). The polypeptide is Alpha-conotoxin PIVA (Conus purpurascens (Purple cone)).